Consider the following 389-residue polypeptide: Geodin cluster transcriptional coactivator gedD (389 aa).

Residues 13–83 (LAWHVQLLAC…QPGQIMHTPL (71 aa)) enclose the HTH iclR-type domain. The H-T-H motif DNA-binding region spans 43–62 (VRDLAQLCGVSETTLSRVVR).

Its subcellular location is the nucleus. Transcriptional coactivator; part of the gene cluster that mediates the biosynthesis of geodin, an intermediate in the biosynthesis of other natural products. With gedR, coregulates the production of geodin. The polypeptide is Geodin cluster transcriptional coactivator gedD (gedD) (Aspergillus terreus (strain NIH 2624 / FGSC A1156)).